We begin with the raw amino-acid sequence, 186 residues long: MINLVEKEWQEHQKIAQESEILKGQIAKAGELLCECLKKGGKILICGNGGSAADAQHFAAELSGRYKKERKALAGIALTTDTSALSAIGNDYGFEFVFSRQVEALGNENDVLIGISTSGKSPNVLEAFKKAKELNMLCLGLSGKGGGMMNKLCDHNLVVPSDDTARIQEMHILIIHTLCQIIDEGF.

Residues 33–186 (LCECLKKGGK…TLCQIIDEGF (154 aa)) enclose the SIS domain. 48–50 (NGG) contributes to the substrate binding site. His57 and Glu61 together coordinate Zn(2+). Substrate contacts are provided by residues Glu61, 90-91 (ND), 116-118 (STS), Ser121, and Gln168. Zn(2+) contacts are provided by Gln168 and His176.

Belongs to the SIS family. GmhA subfamily. As to quaternary structure, homotetramer. Zn(2+) is required as a cofactor.

It is found in the cytoplasm. The catalysed reaction is 2 D-sedoheptulose 7-phosphate = D-glycero-alpha-D-manno-heptose 7-phosphate + D-glycero-beta-D-manno-heptose 7-phosphate. It participates in carbohydrate biosynthesis; D-glycero-D-manno-heptose 7-phosphate biosynthesis; D-glycero-alpha-D-manno-heptose 7-phosphate and D-glycero-beta-D-manno-heptose 7-phosphate from sedoheptulose 7-phosphate: step 1/1. In terms of biological role, catalyzes the isomerization of sedoheptulose 7-phosphate in D-glycero-D-manno-heptose 7-phosphate. This Campylobacter jejuni subsp. jejuni serotype O:6 (strain 81116 / NCTC 11828) protein is Phosphoheptose isomerase.